We begin with the raw amino-acid sequence, 170 residues long: NADH-quinone oxidoreductase subunit E (170 aa).

Residues Cys93, Cys98, Cys134, and Cys138 each contribute to the [2Fe-2S] cluster site.

Belongs to the complex I 24 kDa subunit family. Requires [2Fe-2S] cluster as cofactor.

The enzyme catalyses a quinone + NADH + 5 H(+)(in) = a quinol + NAD(+) + 4 H(+)(out). In terms of biological role, NDH-1 shuttles electrons from NADH, via FMN and iron-sulfur (Fe-S) centers, to quinones in the respiratory chain. Couples the redox reaction to proton translocation (for every two electrons transferred, four hydrogen ions are translocated across the cytoplasmic membrane), and thus conserves the redox energy in a proton gradient. The sequence is that of NADH-quinone oxidoreductase subunit E (nuoE) from Rickettsia typhi (strain ATCC VR-144 / Wilmington).